A 493-amino-acid polypeptide reads, in one-letter code: Chitinase 1 (493 aa).

Positions 1-20 (MISCNILGITIAAFITSTLA) are cleaved as a signal peptide. The GH18 domain occupies 27–318 (VNVMYYWGQN…HGSSAALGQA (292 aa)). The Proton donor role is filled by glutamate 164.

It belongs to the glycosyl hydrolase 18 family. Chitinase class III subfamily.

It carries out the reaction Random endo-hydrolysis of N-acetyl-beta-D-glucosaminide (1-&gt;4)-beta-linkages in chitin and chitodextrins.. This is Chitinase 1 (CHI1) from Rhizopus niveus.